The chain runs to 282 residues: WRKY transcription factor 71 (282 aa).

A disordered region spans residues Leu-63 to Glu-121. Over residues Ser-65–Asn-75 the composition is skewed to low complexity. The span at Gly-77–Gly-99 shows a compositional bias: basic and acidic residues. The WRKY DNA-binding region spans Ser-130–Pro-195.

Belongs to the WRKY group II-c family.

Its subcellular location is the nucleus. In terms of biological role, transcription factor. Interacts specifically with the W box (5'-(T)TGAC[CT]-3'), a frequently occurring elicitor-responsive cis-acting element. The sequence is that of WRKY transcription factor 71 (WRKY71) from Arabidopsis thaliana (Mouse-ear cress).